Here is a 561-residue protein sequence, read N- to C-terminus: Transcription factor Clamp (561 aa).

The C2H2-type 1 zinc-finger motif lies at 127–149 (FKCDVCSDMFPHLALLNAHKRMH). Zn(2+)-binding residues include Cys-129, Cys-132, His-145, and His-149. A disordered region spans residues 290–315 (TGGTTPKREASSGSGHHPVKKRNSQQ). 6 consecutive C2H2-type zinc fingers follow at residues 360 to 382 (FSCNICGGLFSRYSSLWSHKKLH), 388 to 410 (YKCSICGLAFAKAVYLKNHARIH), 416 to 438 (YKCQTCGMQFSQSPHLKNHERTH), 444 to 466 (YVCGVCDKGFARHATLWNHRRIH), 472 to 494 (YKCEICGSAFSQAAHLKNHAKVH), and 500 to 522 (YKCEICSAAFADRFALKRHRGIH).

In terms of assembly, homodimer. Interacts with msl-2; promoting recruitment of the male-specific lethal (MSL) histone acetyltransferase complex to chromatin. Interacts with Nelf-A. Interacts with NELF-B.

It localises to the nucleus. The protein resides in the chromosome. Transcription factor involved in X-chromosome dosage compensation in males, the process by which transcription of the single X chromosome in the male is elevated. Binds to the DNA sequence (GA)n. Clamp-binding promotes nucleosome depletion and chromatin accessibility, thereby allowing access to other transcription factors. Specifically binds to cis-acting elements on the X-chromosome named chromatin entry sites and promotes recruitment of the male-specific lethal (MSL) histone acetyltransferase complex, which associates with actively transcribed genes on the male X-chromosome to upregulate their expression. Mechanistically, acts by promoting chromatin accessibility at chromatin entry sites, facilitating DNA-binding of msl-2, followed by MSL complex recruitment. In addition to dosage compensation, also involved in zygotic genome activation (ZGA), a critical event in early embryonic development during which the developmental control passes from maternally provided mRNAs to the expression of the zygotic genome after fertilization. Maternally-provided protein cooperates with Zelda (zld) to activate zygotic transcription by increasing chromatin accessibility at promoters of specific genes and facilitate zld occupancy at a subset of key embryonic promoters. Also acts as an activator of gypsy chromatin insulator function by promoting binding of Cp190 to chromatin. In Drosophila melanogaster (Fruit fly), this protein is Transcription factor Clamp.